The sequence spans 113 residues: MTTSFYFLLVALGLLLYVCQSSFGNQHTRNSDTPKHRCGSELADQYVQLCHGKRNDAGKKRGRASPLWQRQGFLSMLKAKRNEAFFLQRDGRGIVEVCCDNPCTVATLRTFCH.

Positions 1-21 (MTTSFYFLLVALGLLLYVCQS) are cleaved as a signal peptide. The propeptide occupies 22–29 (SFGNQHTR). P34 bears the 4-hydroxyproline; partial mark. 3 disulfide bridges follow: C38–C99, C50–C112, and C98–C103. A 4-carboxyglutamate modification is found at E41. A Histidine amide modification is found at H51. A propeptide spans 52–92 (GKRNDAGKKRGRASPLWQRQGFLSMLKAKRNEAFFLQRDGR) (c peptide). E96 is subject to 4-carboxyglutamate. P102 is subject to 4-hydroxyproline; partial.

Belongs to the insulin family. In terms of assembly, heterodimer of A and B chains; disulfide-linked. Post-translationally, it is noteworthy that in this dimer, in contrast to Con-Ins G1, the chain B is amidated and not the chain A. In terms of tissue distribution, expressed by the venom gland.

It is found in the secreted. Functionally, this venom insulin, from a fish-hunting cone snail, facilitates prey capture by rapidly inducing hypoglycemic shock. It is one of the smallest known insulin found in nature and lacks the C-terminal segment of the B chain that, in human insulin, mediates engagement of the insulin receptor (INSR) and assembly of the hormone's hexameric storage form. Despite lacking this segment, it both binds and activates human insulin receptor (long isoform (HIR-B)) with a high potency (EC(50)=242 nM). In vivo, intraperitoneal injection of this peptide into zebrafish lowers blood glucose with a lower potency than human insulin. In addition, when applied to water, this peptide reduces overall locomotor activity of zebrafish larvae, observed as a significant decrease in the percentage of time spent swimming and movement frequency. When tested on a mouse model of diabetes, this insulin also lowers blood glucose with a 10-fold lower potency than human insulin. The polypeptide is Con-Ins G3 (Conus geographus (Geography cone)).